The chain runs to 417 residues: Phosphoglycerate kinase 2 (417 aa).

S2 bears the N-acetylserine mark. Residues S2 and S4 each carry the phosphoserine modification. Residue K11 is modified to N6-acetyllysine. Positions 23, 24, 25, 26, 38, and 39 each coordinate (2R)-3-phosphoglycerate. N6-acetyllysine is present on K48. The (2R)-3-phosphoglycerate site is built by S62, H63, G65, and R66. 3 positions are modified to N6-acetyllysine: K75, K86, and K97. Positions 122 and 123 each coordinate (2R)-3-phosphoglycerate. An N6-acetyllysine mark is found at K131 and K146. Residues H170 and R171 each coordinate (2R)-3-phosphoglycerate. Y196 carries the post-translational modification Phosphotyrosine. Position 199 is an N6-acetyllysine (K199). Residue G214 coordinates ADP. G214 is a binding site for CDP. Positions 215 and 216 each coordinate AMP. A215 contacts ATP. Mg(2+) is bound at residue A215. Positions 218 and 219 each coordinate Mg(2+). D219 contacts CDP. K220 contacts AMP. K220 is a binding site for ATP. G238 lines the ADP pocket. Position 238 (G238) interacts with CDP. AMP is bound at residue G239. Residue G239 coordinates ATP. An N6-acetyllysine mark is found at K267 and K291. G313 contacts AMP. G313 contributes to the ATP binding site. G338 and F343 together coordinate CDP. Residue F343 participates in ADP binding. E344 serves as a coordination point for AMP. ATP is bound by residues E344, D375, and T376. D375 is a binding site for Mg(2+).

Belongs to the phosphoglycerate kinase family. In terms of assembly, monomer. The cofactor is Mg(2+). Mainly found in round spermatids. Localized on the principle piece in the sperm (at protein level). Testis-specific. Expression significantly decreased in the testis of elderly men.

It is found in the cytoplasm. It carries out the reaction (2R)-3-phosphoglycerate + ATP = (2R)-3-phospho-glyceroyl phosphate + ADP. The protein operates within carbohydrate degradation; glycolysis; pyruvate from D-glyceraldehyde 3-phosphate: step 2/5. In terms of biological role, essential for sperm motility and male fertility. Not required for the completion of spermatogenesis. The polypeptide is Phosphoglycerate kinase 2 (PGK2) (Homo sapiens (Human)).